The following is a 474-amino-acid chain: UDP-N-acetylmuramate--L-alanine ligase (474 aa).

115–121 (GTHGKTT) is a binding site for ATP.

This sequence belongs to the MurCDEF family.

It localises to the cytoplasm. It carries out the reaction UDP-N-acetyl-alpha-D-muramate + L-alanine + ATP = UDP-N-acetyl-alpha-D-muramoyl-L-alanine + ADP + phosphate + H(+). It functions in the pathway cell wall biogenesis; peptidoglycan biosynthesis. Its function is as follows. Cell wall formation. In Novosphingobium aromaticivorans (strain ATCC 700278 / DSM 12444 / CCUG 56034 / CIP 105152 / NBRC 16084 / F199), this protein is UDP-N-acetylmuramate--L-alanine ligase.